Reading from the N-terminus, the 151-residue chain is 6,7-dimethyl-8-ribityllumazine synthase (151 aa).

5-amino-6-(D-ribitylamino)uracil contacts are provided by residues Phe-15, 47 to 49 (TFE), and 71 to 73 (AVI). 76–77 (ET) contacts (2S)-2-hydroxy-3-oxobutyl phosphate. His-79 (proton donor) is an active-site residue. Leu-104 is a 5-amino-6-(D-ribitylamino)uracil binding site. Arg-119 provides a ligand contact to (2S)-2-hydroxy-3-oxobutyl phosphate.

It belongs to the DMRL synthase family.

It carries out the reaction (2S)-2-hydroxy-3-oxobutyl phosphate + 5-amino-6-(D-ribitylamino)uracil = 6,7-dimethyl-8-(1-D-ribityl)lumazine + phosphate + 2 H2O + H(+). It functions in the pathway cofactor biosynthesis; riboflavin biosynthesis; riboflavin from 2-hydroxy-3-oxobutyl phosphate and 5-amino-6-(D-ribitylamino)uracil: step 1/2. In terms of biological role, catalyzes the formation of 6,7-dimethyl-8-ribityllumazine by condensation of 5-amino-6-(D-ribitylamino)uracil with 3,4-dihydroxy-2-butanone 4-phosphate. This is the penultimate step in the biosynthesis of riboflavin. In Metallosphaera sedula (strain ATCC 51363 / DSM 5348 / JCM 9185 / NBRC 15509 / TH2), this protein is 6,7-dimethyl-8-ribityllumazine synthase.